The primary structure comprises 1978 residues: Protein MOR1 (1978 aa).

2 HEAT repeats span residues 48-86 and 165-202; these read DPRL…AADS and IPPK…WIGK. The tract at residues 230 to 264 is disordered; the sequence is AGAKPTRKIRSEQDKEPEAEASSDVVGDGPSEEAV. A compositionally biased stretch (basic and acidic residues) spans 238–247; it reads IRSEQDKEPE. 3 HEAT repeats span residues 322–359, 363–400, and 442–479; these read GDFS…GLRT, ASSR…AGCL, and KAHK…SVGM. The segment at 501–587 is disordered; sequence IAGSGGGDQA…SVEPPEDVEP (87 aa). Over residues 510–527 the composition is skewed to low complexity; the sequence is AGTSSVTVQSSVGSTATG. Residues 565–577 are compositionally biased toward basic and acidic residues; the sequence is GKKDGSVRNEGSK. HEAT repeat units follow at residues 849 to 886, 890 to 928, 932 to 969, and 1008 to 1045; these read DIST…EANK, PTGT…AMGP, KASK…AVHL, and VDAI…VSGQ. The tract at residues 1087 to 1115 is disordered; it reads SKGVTKISKSTSNGTLKQGNRSRAVPTKG. Residues 1093–1107 show a composition bias toward polar residues; sequence ISKSTSNGTLKQGNR. 4 HEAT repeats span residues 1230-1253, 1254-1286, 1287-1325, and 1328-1365; these read LKVL…MTEA, EAAI…QIIQ, AYSV…TCGT, and GGLL…ILGA. Positions 1393 to 1403 are enriched in basic and acidic residues; sequence MEKRREGKPGE. The disordered stretch occupies residues 1393-1431; sequence MEKRREGKPGEARAALRRSVRDSGPEVAEQSGDISQTVP. The stretch at 1535-1575 is one HEAT 14 repeat; the sequence is RSCKYVLNTLMQTFQNKKLAHAVKEGTLESLITELLLWLLD. Residues 1837 to 1862 form a disordered region; it reads AAAGRTPSSLPLSTPPPSSLALPSPD.

It belongs to the TOG/XMAP215 family. As to expression, expressed in roots, cotyledons, rosette leaves, stems, open flowers and green siliques.

It localises to the cytoplasm. It is found in the cytoskeleton. The protein localises to the phragmoplast. Its subcellular location is the spindle. In terms of biological role, microtubule-binding protein that is essential for cortical microtubules organization and function. Essential for maintaining the interphase cortical array and for correct morphogenesis. Promotes rapid growth and shrinkage of microtubules and suppresses the pausing of interphase microtubules. Regulates the structure and function of microtubule arrays during mitosis and cytokinesis. Probably not required for cellulose microfibrils alignment in roots. In Arabidopsis thaliana (Mouse-ear cress), this protein is Protein MOR1 (MOR1).